We begin with the raw amino-acid sequence, 200 residues long: Phospholipase A2 inhibitor gamma subunit B (200 aa).

Residues 1-19 (MKSFLFCCLLGTFLAIGMC) form the signal peptide. 8 cysteine pairs are disulfide-bonded: Cys22/Cys46, Cys25/Cys32, Cys39/Cys67, Cys73/Cys94, Cys95/Cys100, Cys120/Cys145, Cys138/Cys165, and Cys171/Cys191. The N-linked (GlcNAc...) asparagine glycan is linked to Asn33.

Belongs to the CNF-like-inhibitor family. Heterodimer of subunit A and subunit B. In terms of tissue distribution, expressed by the liver.

It localises to the secreted. Inhibits the enzymatic activity of phospholipase A2 (PA2). The chain is Phospholipase A2 inhibitor gamma subunit B from Gloydius brevicaudus siniticus (Chinese mamushi).